The following is a 232-amino-acid chain: tRNA-uridine aminocarboxypropyltransferase (232 aa).

Zn(2+)-binding residues include cysteine 31, cysteine 34, cysteine 41, and cysteine 43. Residues 137-140 (DGTW) carry the DXTW motif.

The protein belongs to the TDD superfamily. DTWD2 family. TapT subfamily. In terms of assembly, monomer in solution.

The catalysed reaction is a uridine in tRNA + S-adenosyl-L-methionine = a 3-[(3S)-3-amino-3-carboxypropyl]uridine in tRNA + S-methyl-5'-thioadenosine + H(+). It carries out the reaction uridine(47) in tRNA(Phe) + S-adenosyl-L-methionine = 3-[(3S)-3-amino-3-carboxypropyl]uridine(47) in tRNA(Phe) + S-methyl-5'-thioadenosine + H(+). With respect to regulation, the degree of the acp3U modification at U47 is dependent on the presence of the m7G modification at the preceding nucleotide G46. It also depends on medium conditions. In terms of biological role, catalyzes the formation of 3-(3-amino-3-carboxypropyl)uridine (acp3U) at position 47 of tRNAs. Acp3U47 confers thermal stability on tRNA. The polypeptide is tRNA-uridine aminocarboxypropyltransferase (Escherichia coli (strain K12)).